Reading from the N-terminus, the 338-residue chain is Heat-inducible transcription repressor HrcA (338 aa).

Belongs to the HrcA family.

In terms of biological role, negative regulator of class I heat shock genes (grpE-dnaK-dnaJ and groELS operons). Prevents heat-shock induction of these operons. This Polaromonas sp. (strain JS666 / ATCC BAA-500) protein is Heat-inducible transcription repressor HrcA.